We begin with the raw amino-acid sequence, 145 residues long: Small ribosomal subunit protein uS17c (145 aa).

The transit peptide at M1 to A36 directs the protein to the chloroplast. Residues K101–D145 form a disordered region. Residues Q120 to Q136 show a composition bias toward low complexity.

The protein belongs to the universal ribosomal protein uS17 family. Part of the 30S ribosomal subunit.

The protein localises to the plastid. Its subcellular location is the chloroplast. One of the primary rRNA binding proteins, it binds specifically to the 5'-end of 16S ribosomal RNA. The protein is Small ribosomal subunit protein uS17c (RPS17) of Oryza sativa subsp. japonica (Rice).